We begin with the raw amino-acid sequence, 260 residues long: NH(3)-dependent NAD(+) synthetase (260 aa).

Residue 31–38 (GLSGGLDS) coordinates ATP. Asp37 contacts Mg(2+). Residue Arg112 coordinates deamido-NAD(+). Thr132 lines the ATP pocket. Glu137 contributes to the Mg(2+) binding site. ATP-binding residues include Lys161 and Ser183.

It belongs to the NAD synthetase family. Homodimer.

The enzyme catalyses deamido-NAD(+) + NH4(+) + ATP = AMP + diphosphate + NAD(+) + H(+). Its pathway is cofactor biosynthesis; NAD(+) biosynthesis; NAD(+) from deamido-NAD(+) (ammonia route): step 1/1. In terms of biological role, catalyzes the ATP-dependent amidation of deamido-NAD to form NAD. Uses ammonia as a nitrogen source. In Helicobacter acinonychis (strain Sheeba), this protein is NH(3)-dependent NAD(+) synthetase.